We begin with the raw amino-acid sequence, 408 residues long: RUN domain-containing protein 3B (408 aa).

The segment at 1–25 (MASRSLGGLSGSRGGGGGGGGKKSL) is disordered. The segment covering 8–22 (GLSGSRGGGGGGGGK) has biased composition (gly residues). Omega-N-methylarginine is present on Arg-13. The RUN domain maps to 58–190 (DDSSPEFNNF…IDFSFCLKGE (133 aa)). The tract at residues 213 to 238 (DSISSDEEELRTFGSSDSESSTPENV) is disordered. Phosphoserine occurs at positions 216 and 217. A compositionally biased stretch (polar residues) spans 225-236 (FGSSDSESSTPE). Residues 301 to 326 (AHKLEKEQLEYIIVELQDQLKSYQSL) adopt a coiled-coil conformation. The tract at residues 337-359 (QASLDPSHSQEGDGKQDSLNFIG) is disordered.

The protein belongs to the RUNDC3 family. In terms of assembly, interacts with RAP2A.

The polypeptide is RUN domain-containing protein 3B (Rundc3b) (Mus musculus (Mouse)).